The chain runs to 156 residues: Arginine repressor (156 aa).

Belongs to the ArgR family.

It is found in the cytoplasm. It functions in the pathway amino-acid biosynthesis; L-arginine biosynthesis [regulation]. Regulates arginine biosynthesis genes. The sequence is that of Arginine repressor from Escherichia fergusonii (strain ATCC 35469 / DSM 13698 / CCUG 18766 / IAM 14443 / JCM 21226 / LMG 7866 / NBRC 102419 / NCTC 12128 / CDC 0568-73).